Consider the following 339-residue polypeptide: Phenylalanine--tRNA ligase alpha subunit (339 aa).

Glu254 serves as a coordination point for Mg(2+).

This sequence belongs to the class-II aminoacyl-tRNA synthetase family. Phe-tRNA synthetase alpha subunit type 1 subfamily. In terms of assembly, tetramer of two alpha and two beta subunits. The cofactor is Mg(2+).

The protein resides in the cytoplasm. The enzyme catalyses tRNA(Phe) + L-phenylalanine + ATP = L-phenylalanyl-tRNA(Phe) + AMP + diphosphate + H(+). The chain is Phenylalanine--tRNA ligase alpha subunit from Caldanaerobacter subterraneus subsp. tengcongensis (strain DSM 15242 / JCM 11007 / NBRC 100824 / MB4) (Thermoanaerobacter tengcongensis).